A 307-amino-acid polypeptide reads, in one-letter code: S-methyl-5'-thioadenosine phosphorylase (307 aa).

Phosphate contacts are provided by residues Ser16, 59-60 (RH), and 92-93 (SA). Met198 lines the substrate pocket. Phosphate is bound at residue Ser199. 222-224 (DYD) lines the substrate pocket.

This sequence belongs to the PNP/MTAP phosphorylase family. MTAP subfamily. Homotrimer.

It is found in the cytoplasm. The protein resides in the nucleus. It catalyses the reaction S-methyl-5'-thioadenosine + phosphate = 5-(methylsulfanyl)-alpha-D-ribose 1-phosphate + adenine. It participates in amino-acid biosynthesis; L-methionine biosynthesis via salvage pathway; S-methyl-5-thio-alpha-D-ribose 1-phosphate from S-methyl-5'-thioadenosine (phosphorylase route): step 1/1. Its function is as follows. Catalyzes the reversible phosphorylation of S-methyl-5'-thioadenosine (MTA) to adenine and 5-methylthioribose-1-phosphate. Involved in the breakdown of MTA, a major by-product of polyamine biosynthesis. Responsible for the first step in the methionine salvage pathway after MTA has been generated from S-adenosylmethionine. Has broad substrate specificity with 6-aminopurine nucleosides as preferred substrates. The protein is S-methyl-5'-thioadenosine phosphorylase of Schizosaccharomyces pombe (strain 972 / ATCC 24843) (Fission yeast).